A 230-amino-acid polypeptide reads, in one-letter code: 6-carboxyhexanoate--CoA ligase (230 aa).

Belongs to the BioW family. In terms of assembly, homodimer. Requires Mg(2+) as cofactor.

It carries out the reaction heptanedioate + ATP + CoA = 6-carboxyhexanoyl-CoA + AMP + diphosphate. Its pathway is metabolic intermediate metabolism; pimeloyl-CoA biosynthesis; pimeloyl-CoA from pimelate: step 1/1. In terms of biological role, catalyzes the transformation of pimelate into pimeloyl-CoA with concomitant hydrolysis of ATP to AMP. The chain is 6-carboxyhexanoate--CoA ligase from Staphylococcus aureus (strain MRSA252).